Here is a 451-residue protein sequence, read N- to C-terminus: tRNA-2-methylthio-N(6)-dimethylallyladenosine synthase (451 aa).

In terms of domain architecture, MTTase N-terminal spans 5–121; sequence RQYHITTFGC…LQDLLEQVEG (117 aa). Residues C14, C50, C84, C156, C160, and C163 each coordinate [4Fe-4S] cluster. One can recognise a Radical SAM core domain in the interval 142 to 379; the sequence is RDSTVTAWVN…NHLVAQKAAE (238 aa). Residues 382–446 enclose the TRAM domain; the sequence is QRYAGRIEEV…AFSLTGEAVE (65 aa).

Belongs to the methylthiotransferase family. MiaB subfamily. As to quaternary structure, monomer. The cofactor is [4Fe-4S] cluster.

Its subcellular location is the cytoplasm. The enzyme catalyses N(6)-dimethylallyladenosine(37) in tRNA + (sulfur carrier)-SH + AH2 + 2 S-adenosyl-L-methionine = 2-methylsulfanyl-N(6)-dimethylallyladenosine(37) in tRNA + (sulfur carrier)-H + 5'-deoxyadenosine + L-methionine + A + S-adenosyl-L-homocysteine + 2 H(+). Its function is as follows. Catalyzes the methylthiolation of N6-(dimethylallyl)adenosine (i(6)A), leading to the formation of 2-methylthio-N6-(dimethylallyl)adenosine (ms(2)i(6)A) at position 37 in tRNAs that read codons beginning with uridine. This is tRNA-2-methylthio-N(6)-dimethylallyladenosine synthase from Picosynechococcus sp. (strain ATCC 27264 / PCC 7002 / PR-6) (Agmenellum quadruplicatum).